The chain runs to 357 residues: Anthranilate phosphoribosyltransferase (357 aa).

Residues G91, G94–D95, T99, N101–T104, K119–S127, and S131 each bind 5-phospho-alpha-D-ribose 1-diphosphate. G91 provides a ligand contact to anthranilate. S103 provides a ligand contact to Mg(2+). Residue N122 participates in anthranilate binding. R177 serves as a coordination point for anthranilate. Mg(2+) contacts are provided by D235 and E236.

Belongs to the anthranilate phosphoribosyltransferase family. In terms of assembly, homodimer. Mg(2+) serves as cofactor.

It catalyses the reaction N-(5-phospho-beta-D-ribosyl)anthranilate + diphosphate = 5-phospho-alpha-D-ribose 1-diphosphate + anthranilate. Its pathway is amino-acid biosynthesis; L-tryptophan biosynthesis; L-tryptophan from chorismate: step 2/5. In terms of biological role, catalyzes the transfer of the phosphoribosyl group of 5-phosphorylribose-1-pyrophosphate (PRPP) to anthranilate to yield N-(5'-phosphoribosyl)-anthranilate (PRA). The polypeptide is Anthranilate phosphoribosyltransferase (Shewanella baltica (strain OS155 / ATCC BAA-1091)).